A 368-amino-acid polypeptide reads, in one-letter code: Putative F-box/kelch-repeat protein At5g02995 (368 aa).

An F-box domain is found at 35 to 84 (SLYWNDPTEDCVWNCLARISRFHYPTLSLVSKGFRSLIASPELEATRSFI). Kelch repeat units lie at residues 140–186 (DIYI…IVDK) and 187–233 (KIYV…VSGG).

The polypeptide is Putative F-box/kelch-repeat protein At5g02995 (Arabidopsis thaliana (Mouse-ear cress)).